Consider the following 383-residue polypeptide: BRISC and BRCA1-A complex member 2 (383 aa).

Methionine 1 bears the N-acetylmethionine mark. Position 2 is a phosphoserine (serine 2). UEV-like stretches follow at residues 30 to 147 and 275 to 364; these read DATN…TLLE and IAAF…RAKA.

It belongs to the BABAM2 family. Component of the ARISC complex, at least composed of UIMC1/RAP80, ABRAXAS1, BRCC3/BRCC36, BABAM2 and BABAM1/NBA1. Component of the BRCA1-A complex, at least composed of BRCA1, BARD1, UIMC1/RAP80, ABRAXAS1, BRCC3/BRCC36, BABAM2 and BABAM1/NBA1. In the BRCA1-A complex, interacts directly with ABRAXAS1, BRCC3/BRCC36 and BABAM1/NBA1. Binds polyubiquitin. Component of the BRISC complex, at least composed of ABRAXAS2, BRCC3/BRCC36, BABAM2 and BABAM1/NBA1. Identified in a complex with SHMT2 and the other subunits of the BRISC complex. Component of the BRCA1/BRCA2 containing complex (BRCC), which also contains BRCA1, BRCA2, BARD1, BRCC3/BRCC36 and RAD51. BRCC is a ubiquitin E3 ligase complex that enhances cellular survival following DNA damage. May interact with FAS and TNFRSF1A.

The protein localises to the cytoplasm. It localises to the nucleus. In terms of biological role, component of the BRCA1-A complex, a complex that specifically recognizes 'Lys-63'-linked ubiquitinated histones H2A and H2AX at DNA lesions sites, leading to target the BRCA1-BARD1 heterodimer to sites of DNA damage at double-strand breaks (DSBs). The BRCA1-A complex also possesses deubiquitinase activity that specifically removes 'Lys-63'-linked ubiquitin on histones H2A and H2AX. In the BRCA1-A complex, it acts as an adapter that bridges the interaction between BABAM1/NBA1 and the rest of the complex, thereby being required for the complex integrity and modulating the E3 ubiquitin ligase activity of the BRCA1-BARD1 heterodimer. Component of the BRISC complex, a multiprotein complex that specifically cleaves 'Lys-63'-linked ubiquitin in various substrates. Within the BRISC complex, acts as an adapter that bridges the interaction between BABAM1/NBA1 and the rest of the complex, thereby being required for the complex integrity. The BRISC complex is required for normal mitotic spindle assembly and microtubule attachment to kinetochores via its role in deubiquitinating NUMA1. The BRISC complex plays a role in interferon signaling via its role in the deubiquitination of the interferon receptor IFNAR1; deubiquitination increases IFNAR1 activity by enhancing its stability and cell surface expression. Down-regulates the response to bacterial lipopolysaccharide (LPS) via its role in IFNAR1 deubiquitination. May play a role in homeostasis or cellular differentiation in cells of neural, epithelial and germline origins. May also act as a death receptor-associated anti-apoptotic protein, which inhibits the mitochondrial apoptotic pathway. May regulate TNF-alpha signaling through its interactions with TNFRSF1A; however these effects may be indirect. The sequence is that of BRISC and BRCA1-A complex member 2 (BABAM2) from Bos taurus (Bovine).